A 198-amino-acid polypeptide reads, in one-letter code: Peptidyl-tRNA hydrolase (198 aa).

A tRNA-binding site is contributed by Y14. The active-site Proton acceptor is the H19. Residues Y64, N66, and N113 each contribute to the tRNA site.

Belongs to the PTH family. As to quaternary structure, monomer.

It is found in the cytoplasm. It carries out the reaction an N-acyl-L-alpha-aminoacyl-tRNA + H2O = an N-acyl-L-amino acid + a tRNA + H(+). Functionally, hydrolyzes ribosome-free peptidyl-tRNAs (with 1 or more amino acids incorporated), which drop off the ribosome during protein synthesis, or as a result of ribosome stalling. Catalyzes the release of premature peptidyl moieties from peptidyl-tRNA molecules trapped in stalled 50S ribosomal subunits, and thus maintains levels of free tRNAs and 50S ribosomes. The protein is Peptidyl-tRNA hydrolase of Acidobacterium capsulatum (strain ATCC 51196 / DSM 11244 / BCRC 80197 / JCM 7670 / NBRC 15755 / NCIMB 13165 / 161).